The primary structure comprises 567 residues: Proline--tRNA ligase (567 aa).

This sequence belongs to the class-II aminoacyl-tRNA synthetase family. ProS type 1 subfamily. Homodimer.

The protein resides in the cytoplasm. It catalyses the reaction tRNA(Pro) + L-proline + ATP = L-prolyl-tRNA(Pro) + AMP + diphosphate. Its function is as follows. Catalyzes the attachment of proline to tRNA(Pro) in a two-step reaction: proline is first activated by ATP to form Pro-AMP and then transferred to the acceptor end of tRNA(Pro). As ProRS can inadvertently accommodate and process non-cognate amino acids such as alanine and cysteine, to avoid such errors it has two additional distinct editing activities against alanine. One activity is designated as 'pretransfer' editing and involves the tRNA(Pro)-independent hydrolysis of activated Ala-AMP. The other activity is designated 'posttransfer' editing and involves deacylation of mischarged Ala-tRNA(Pro). The misacylated Cys-tRNA(Pro) is not edited by ProRS. This Campylobacter curvus (strain 525.92) protein is Proline--tRNA ligase.